Consider the following 405-residue polypeptide: Envelope glycoprotein M (405 aa).

At 1-17 (MKSSKNDTFVYRTWFKT) the chain is on the intravirion side. The chain crosses the membrane as a helical span at residues 18-38 (LVVYFVMFVMSAVVPITAMFP). The Virion surface portion of the chain corresponds to 39–76 (NLGYPCYFNALVDYGALNLTNYNLAHHLTPTLYLEPPE). Residues 77–97 (MFVYITLVFIADCVAFIYYAC) form a helical membrane-spanning segment. Topologically, residues 98-121 (GEVALIKARKKVSGLTDLSAWVSA) are intravirion. A helical membrane pass occupies residues 122 to 142 (VGSPTVLFLAILKLWSIQVFI). Residues 143–149 (QVLSYKH) are Virion surface-facing. The helical transmembrane segment at 150–170 (VFLSAFVYFLHFLASVLHACA) threads the bilayer. The Intravirion portion of the chain corresponds to 171 to 192 (CVTRFSPVWVVKAQDNSIPQDT). Residues 193–215 (FLWWVVFYLKPIVTNLYLGCLAL) form a helical membrane-spanning segment. Residues 216 to 245 (ETLVFSLSVFLALGNSFYFMVGDMVLGAVN) are Virion surface-facing. A helical transmembrane segment spans residues 246 to 266 (LFLVLPIFWYILTEVWLASFL). A topological domain (intravirion) is located at residue Arg267. The chain crosses the membrane as a helical span at residues 268–288 (HNFGFYCGMFIASIILILPLV). The Virion surface portion of the chain corresponds to 289–299 (RYEAVFVSAKL). Residues 300–320 (HTTVAINVAIIPILCSVAMLI) traverse the membrane as a helical segment. The Intravirion segment spans residues 321 to 405 (RICRIFKSMR…TTDSEEEIFP (85 aa)). The interval 346 to 405 (LESEPRPRPSRTPSPGRNRRRSSTSSSSSRSTRRQRPVSTQALISSVLPMTTDSEEEIFP) is disordered. Over residues 386–397 (QALISSVLPMTT) the composition is skewed to polar residues.

Belongs to the herpesviridae glycoprotein M family. In terms of assembly, interacts (via N-terminus) with gN (via N-terminus). The gM-gN heterodimer forms the gCII complex.

It is found in the virion membrane. The protein localises to the host Golgi apparatus. Its subcellular location is the host trans-Golgi network. The protein resides in the host endosome membrane. It localises to the host nucleus inner membrane. Its function is as follows. Envelope glycoprotein important for virion assembly and egress. Plays a role in the correct incorporation of gH-gL into virion membrane. Directs the glycoprotein N (gN) to the host trans-Golgi network. In Homo sapiens (Human), this protein is Envelope glycoprotein M.